Here is a 239-residue protein sequence, read N- to C-terminus: Major centromere autoantigen B (239 aa).

A disordered region spans residues 28–185; it reads AGFGGGPNAT…DDEVPVPSFG (158 aa). Thr37 and Thr39 each carry phosphothreonine. Composition is skewed to acidic residues over residues 46–117 and 148–179; these read GEEE…EAED and GEED…DDEV. The tract at residues 176–239 is homodimerization; the sequence is DDEVPVPSFG…AGARGLGHQS (64 aa).

In terms of assembly, antiparallel homodimer. Interacts with CENPT. Identified in a centromere complex containing histones H2A, H2B and H4, and at least CENPA, CENPB, CENPC, CENPT, CENPN, HJURP, SUPT16H, SSRP1 and RSF1. Post-translationally, poly-ADP-ribosylated by PARP1. In terms of processing, N-terminally methylated by METTL11A/NTM1. Alpha-N-methylation is stimulated in response extracellular stimuli, including increased cell density and heat shock, and seems to facilitate binding to CENP-B boxes. Chromatin-bound CENP-B is primarily trimethylated.

It is found in the nucleus. The protein resides in the chromosome. The protein localises to the centromere. Its function is as follows. Interacts with centromeric heterochromatin in chromosomes and binds to a specific 17 bp subset of alphoid satellite DNA, called the CENP-B box. May organize arrays of centromere satellite DNA into a higher-order structure which then directs centromere formation and kinetochore assembly in mammalian chromosomes. This Ovis aries (Sheep) protein is Major centromere autoantigen B (CENPB).